The primary structure comprises 163 residues: Peptide deformylase (163 aa).

2 residues coordinate Fe cation: Cys91 and His133. The active site involves Glu134. His137 serves as a coordination point for Fe cation.

This sequence belongs to the polypeptide deformylase family. Fe(2+) serves as cofactor.

The enzyme catalyses N-terminal N-formyl-L-methionyl-[peptide] + H2O = N-terminal L-methionyl-[peptide] + formate. Removes the formyl group from the N-terminal Met of newly synthesized proteins. Requires at least a dipeptide for an efficient rate of reaction. N-terminal L-methionine is a prerequisite for activity but the enzyme has broad specificity at other positions. This chain is Peptide deformylase, found in Lachnoclostridium phytofermentans (strain ATCC 700394 / DSM 18823 / ISDg) (Clostridium phytofermentans).